The chain runs to 149 residues: Transcriptional repressor NrdR (149 aa).

A zinc finger spans residues Cys-3–Cys-34. One can recognise an ATP-cone domain in the interval Pro-49–Glu-139.

Belongs to the NrdR family. Zn(2+) serves as cofactor.

Functionally, negatively regulates transcription of bacterial ribonucleotide reductase nrd genes and operons by binding to NrdR-boxes. The protein is Transcriptional repressor NrdR of Shewanella putrefaciens (strain CN-32 / ATCC BAA-453).